The primary structure comprises 334 residues: N-acetyl-gamma-glutamyl-phosphate reductase (334 aa).

The active site involves Cys-142.

Belongs to the NAGSA dehydrogenase family. Type 1 subfamily.

Its subcellular location is the cytoplasm. It catalyses the reaction N-acetyl-L-glutamate 5-semialdehyde + phosphate + NADP(+) = N-acetyl-L-glutamyl 5-phosphate + NADPH + H(+). Its pathway is amino-acid biosynthesis; L-arginine biosynthesis; N(2)-acetyl-L-ornithine from L-glutamate: step 3/4. Functionally, catalyzes the NADPH-dependent reduction of N-acetyl-5-glutamyl phosphate to yield N-acetyl-L-glutamate 5-semialdehyde. The sequence is that of N-acetyl-gamma-glutamyl-phosphate reductase from Pelodictyon phaeoclathratiforme (strain DSM 5477 / BU-1).